Reading from the N-terminus, the 404-residue chain is CCA-adding enzyme (404 aa).

ATP contacts are provided by Gly27 and Arg30. Residues Gly27 and Arg30 each contribute to the CTP site. Positions 40 and 42 each coordinate Mg(2+). ATP-binding residues include Arg111, Asp154, Arg157, Arg160, and Arg163. CTP-binding residues include Arg111, Asp154, Arg157, Arg160, and Arg163.

This sequence belongs to the tRNA nucleotidyltransferase/poly(A) polymerase family. Bacterial CCA-adding enzyme type 3 subfamily. As to quaternary structure, homodimer. The cofactor is Mg(2+).

The enzyme catalyses a tRNA precursor + 2 CTP + ATP = a tRNA with a 3' CCA end + 3 diphosphate. It catalyses the reaction a tRNA with a 3' CCA end + 2 CTP + ATP = a tRNA with a 3' CCACCA end + 3 diphosphate. Its function is as follows. Catalyzes the addition and repair of the essential 3'-terminal CCA sequence in tRNAs without using a nucleic acid template. Adds these three nucleotides in the order of C, C, and A to the tRNA nucleotide-73, using CTP and ATP as substrates and producing inorganic pyrophosphate. tRNA 3'-terminal CCA addition is required both for tRNA processing and repair. Also involved in tRNA surveillance by mediating tandem CCA addition to generate a CCACCA at the 3' terminus of unstable tRNAs. While stable tRNAs receive only 3'-terminal CCA, unstable tRNAs are marked with CCACCA and rapidly degraded. The sequence is that of CCA-adding enzyme from Geobacillus thermodenitrificans (strain NG80-2).